A 506-amino-acid chain; its full sequence is Anaerobic nitric oxide reductase transcription regulator NorR (506 aa).

Asp57 bears the 4-aspartylphosphate mark. The Sigma-54 factor interaction domain occupies 187 to 416 (MIGLSPAMTQ…LEHAIHRAVV (230 aa)). ATP contacts are provided by residues 215 to 222 (GETGTGKE) and 278 to 287 (ADNGTLFLDE). Positions 481–500 (WAASARALETDVANLHRLAK) form a DNA-binding region, H-T-H motif.

The protein operates within nitrogen metabolism; nitric oxide reduction. In terms of biological role, required for the expression of anaerobic nitric oxide (NO) reductase, acts as a transcriptional activator for at least the norVW operon. Activation also requires sigma-54. The polypeptide is Anaerobic nitric oxide reductase transcription regulator NorR (Salmonella paratyphi C (strain RKS4594)).